The sequence spans 432 residues: Adenylosuccinate synthetase (432 aa).

Residues 11–17 (GDEGKGK) and 39–41 (GHT) contribute to the GTP site. The active-site Proton acceptor is the Asp12. 2 residues coordinate Mg(2+): Asp12 and Gly39. IMP is bound by residues 12 to 15 (DEGK), 37 to 40 (NAGH), Thr134, Arg148, Asn230, Thr245, and Arg309. The active-site Proton donor is His40. 305-311 (VTTGRKR) contributes to the substrate binding site. Residues Arg311, 337 to 339 (KLD), and 419 to 421 (GTG) contribute to the GTP site.

The protein belongs to the adenylosuccinate synthetase family. As to quaternary structure, homodimer. Requires Mg(2+) as cofactor.

The protein resides in the cytoplasm. The catalysed reaction is IMP + L-aspartate + GTP = N(6)-(1,2-dicarboxyethyl)-AMP + GDP + phosphate + 2 H(+). It participates in purine metabolism; AMP biosynthesis via de novo pathway; AMP from IMP: step 1/2. Its function is as follows. Plays an important role in the de novo pathway and in the salvage pathway of purine nucleotide biosynthesis. Catalyzes the first committed step in the biosynthesis of AMP from IMP. The sequence is that of Adenylosuccinate synthetase from Candida glabrata (strain ATCC 2001 / BCRC 20586 / JCM 3761 / NBRC 0622 / NRRL Y-65 / CBS 138) (Yeast).